A 401-amino-acid chain; its full sequence is GRIP domain-containing protein C119.12 (401 aa).

A coiled-coil region spans residues 7-296 (NETKLVENEN…TLLIGKLQHE (290 aa)). The region spanning 315–366 (NNAEKIDKQLISNLFVSFLTLPRADTKRFEILQLISSVLDWNDTQREQTGLQ) is the GRIP domain.

Its subcellular location is the golgi apparatus lumen. The protein is GRIP domain-containing protein C119.12 of Schizosaccharomyces pombe (strain 972 / ATCC 24843) (Fission yeast).